Consider the following 876-residue polypeptide: Leucine--tRNA ligase (876 aa).

The 'HIGH' region motif lies at 43-53; the sequence is PYPSGRIHMGH. The short motif at 632 to 636 is the 'KMSKS' region element; sequence KMSKS. Lys-635 provides a ligand contact to ATP.

This sequence belongs to the class-I aminoacyl-tRNA synthetase family.

It localises to the cytoplasm. The catalysed reaction is tRNA(Leu) + L-leucine + ATP = L-leucyl-tRNA(Leu) + AMP + diphosphate. This is Leucine--tRNA ligase from Rhodopseudomonas palustris (strain ATCC BAA-98 / CGA009).